A 194-amino-acid chain; its full sequence is Ion-translocating oxidoreductase complex subunit B (194 aa).

Positions 1–26 (MSGVLIAVAALLALAAVFGAVLGFAS) are hydrophobic. A 4Fe-4S domain is found at 32 to 90 (EGDPIVDQIDSLLPQTQCGQCGHPGCRPYAEAIAEGEEHNRCPPGGQDTVVALSELLGR). 12 residues coordinate [4Fe-4S] cluster: Cys49, Cys52, Cys57, Cys73, Cys116, Cys119, Cys122, Cys126, Cys146, Cys149, Cys152, and Cys156. 2 4Fe-4S ferredoxin-type domains span residues 107 to 136 (KVAY…GAAK) and 137 to 166 (LMHT…MLEV).

Belongs to the 4Fe4S bacterial-type ferredoxin family. RnfB subfamily. As to quaternary structure, the complex is composed of six subunits: RnfA, RnfB, RnfC, RnfD, RnfE and RnfG. It depends on [4Fe-4S] cluster as a cofactor.

The protein resides in the cell inner membrane. Its function is as follows. Part of a membrane-bound complex that couples electron transfer with translocation of ions across the membrane. The polypeptide is Ion-translocating oxidoreductase complex subunit B (Alcanivorax borkumensis (strain ATCC 700651 / DSM 11573 / NCIMB 13689 / SK2)).